The chain runs to 592 residues: Proteasome-associated ATPase (592 aa).

Residues 1 to 11 (MTGYDSSEEAE) are compositionally biased toward acidic residues. A disordered region spans residues 1 to 24 (MTGYDSSEEAERDSSPADGYRQTP). Residues 25-99 (AQLSAQIRVL…LKEEVDRLAQ (75 aa)) are a coiled coil. Residue 281–286 (GCGKTL) participates in ATP binding. The docks into pockets in the proteasome alpha-ring stretch occupies residues 591–592 (YL).

Belongs to the AAA ATPase family. Homohexamer. Assembles into a hexameric ring structure that caps the 20S proteasome core. Strongly interacts with the prokaryotic ubiquitin-like protein Pup through a hydrophobic interface; the interacting region of ARC lies in its N-terminal coiled-coil domain. There is one Pup binding site per ARC hexamer ring. Upon ATP-binding, the C-terminus of ARC interacts with the alpha-rings of the proteasome core, possibly by binding to the intersubunit pockets.

The protein operates within protein degradation; proteasomal Pup-dependent pathway. In terms of biological role, ATPase which is responsible for recognizing, binding, unfolding and translocation of pupylated proteins into the bacterial 20S proteasome core particle. May be essential for opening the gate of the 20S proteasome via an interaction with its C-terminus, thereby allowing substrate entry and access to the site of proteolysis. Thus, the C-termini of the proteasomal ATPase may function like a 'key in a lock' to induce gate opening and therefore regulate proteolysis. The chain is Proteasome-associated ATPase from Nakamurella multipartita (strain ATCC 700099 / DSM 44233 / CIP 104796 / JCM 9543 / NBRC 105858 / Y-104) (Microsphaera multipartita).